A 370-amino-acid polypeptide reads, in one-letter code: Queuine tRNA-ribosyltransferase (370 aa).

The Proton acceptor role is filled by aspartate 89. Residues 89–93 (DSGGF), aspartate 143, and glycine 214 each bind substrate. The interval 245 to 251 (GVGKPED) is RNA binding. Catalysis depends on aspartate 264, which acts as the Nucleophile. Positions 269–273 (TRNAR) are RNA binding; important for wobble base 34 recognition. Zn(2+) is bound by residues cysteine 302, cysteine 304, cysteine 307, and histidine 333.

Belongs to the queuine tRNA-ribosyltransferase family. Homodimer. Within each dimer, one monomer is responsible for RNA recognition and catalysis, while the other monomer binds to the replacement base PreQ1. It depends on Zn(2+) as a cofactor.

It catalyses the reaction 7-aminomethyl-7-carbaguanine + guanosine(34) in tRNA = 7-aminomethyl-7-carbaguanosine(34) in tRNA + guanine. Its pathway is tRNA modification; tRNA-queuosine biosynthesis. Its function is as follows. Catalyzes the base-exchange of a guanine (G) residue with the queuine precursor 7-aminomethyl-7-deazaguanine (PreQ1) at position 34 (anticodon wobble position) in tRNAs with GU(N) anticodons (tRNA-Asp, -Asn, -His and -Tyr). Catalysis occurs through a double-displacement mechanism. The nucleophile active site attacks the C1' of nucleotide 34 to detach the guanine base from the RNA, forming a covalent enzyme-RNA intermediate. The proton acceptor active site deprotonates the incoming PreQ1, allowing a nucleophilic attack on the C1' of the ribose to form the product. After dissociation, two additional enzymatic reactions on the tRNA convert PreQ1 to queuine (Q), resulting in the hypermodified nucleoside queuosine (7-(((4,5-cis-dihydroxy-2-cyclopenten-1-yl)amino)methyl)-7-deazaguanosine). In Buchnera aphidicola subsp. Acyrthosiphon pisum (strain 5A), this protein is Queuine tRNA-ribosyltransferase.